The following is a 178-amino-acid chain: Stage V sporulation protein T (178 aa).

A SpoVT-AbrB domain is found at G5 to P51. The segment at G56–Q178 is GAF-like.

It to B.subtilis AbrB and Abh. As to quaternary structure, homotetramer. Two monomers dimerize via their N-terminal swapped-hairpin domains. These dimers further associate into tetramers through helical interactions between their C-terminal GAF-like domains.

Transcriptional factor that positively regulates or negatively the expression of a large number of forespore-specific sigma G-dependent genes. May provide a mechanism of feedback control that is important for forespore development. SpoVT levels during spore formation have a major impact on the germination and the resistance of the resultant spores. The chain is Stage V sporulation protein T from Bacillus subtilis (strain 168).